Consider the following 298-residue polypeptide: UDP-N-acetylenolpyruvoylglucosamine reductase (298 aa).

Residues 26–191 enclose the FAD-binding PCMH-type domain; it reads KTGGAADVFV…LDATFSLALE (166 aa). Arginine 170 is an active-site residue. The active-site Proton donor is the serine 220. The active site involves glutamate 290.

It belongs to the MurB family. The cofactor is FAD.

It localises to the cytoplasm. The enzyme catalyses UDP-N-acetyl-alpha-D-muramate + NADP(+) = UDP-N-acetyl-3-O-(1-carboxyvinyl)-alpha-D-glucosamine + NADPH + H(+). The protein operates within cell wall biogenesis; peptidoglycan biosynthesis. Cell wall formation. This is UDP-N-acetylenolpyruvoylglucosamine reductase from Listeria monocytogenes serotype 4b (strain CLIP80459).